We begin with the raw amino-acid sequence, 188 residues long: Ion-translocating oxidoreductase complex subunit B (188 aa).

The tract at residues 1–26 is hydrophobic; it reads MMSLWIAIGALSTLALVSGVVLGFAA. A 4Fe-4S domain is found at 32-91; that stretch reads DEDPVVEQVDAILPQSQCGQCGYPGCRPYAEAVSTGGEKINKCAPGGEQVMLKLAELLAV. 12 residues coordinate [4Fe-4S] cluster: Cys49, Cys52, Cys57, Cys74, Cys117, Cys120, Cys123, Cys127, Cys147, Cys150, Cys153, and Cys157. 2 4Fe-4S ferredoxin-type domains span residues 108–137 and 138–167; these read KVAF…GATR and AMHT…MIPV.

Belongs to the 4Fe4S bacterial-type ferredoxin family. RnfB subfamily. In terms of assembly, the complex is composed of six subunits: RnfA, RnfB, RnfC, RnfD, RnfE and RnfG. [4Fe-4S] cluster serves as cofactor.

The protein resides in the cell inner membrane. Its function is as follows. Part of a membrane-bound complex that couples electron transfer with translocation of ions across the membrane. This chain is Ion-translocating oxidoreductase complex subunit B, found in Yersinia pestis bv. Antiqua (strain Antiqua).